The chain runs to 134 residues: DNA-binding protein inhibitor ID-2 (134 aa).

Phosphoserine occurs at positions 14 and 25. The bHLH domain occupies 23 to 75 (SRSKTPVDDPMSLLYNMNDCYSKLKELVPSIPQNKKVTKMEILQHVIDYILDL). The tract at residues 30-83 (DDPMSLLYNMNDCYSKLKELVPSIPQNKKVTKMEILQHVIDYILDLQIALDSHP) is interaction with IFI204. Positions 106-115 (LNTDISILSL) match the Nuclear export signal motif.

Interacts with GATA4 and NKX2-5. Interacts with NR0B2. Interacts with CLOCK and BMAL1. Interacts with IFI204. Interacts with NEDD9/HEF1. Interacts with ASB4; this interaction promotes ID2 proteasomal degradation. In terms of processing, polyubiquitinated; which is favored by Ifi204 and leads to proteasomal degradation. Ubiquitinated in a ASB4-depedent manner, leading to proteasomal degradation. Phosphorylated in vitro by CDK1, PKA and PKC.

The protein localises to the cytoplasm. It localises to the nucleus. Functionally, transcriptional regulator (lacking a basic DNA binding domain) which negatively regulates the basic helix-loop-helix (bHLH) transcription factors by forming heterodimers and inhibiting their DNA binding and transcriptional activity. Implicated in regulating a variety of cellular processes, including cellular growth, senescence, differentiation, apoptosis, angiogenesis, and neoplastic transformation. Inhibits skeletal muscle and cardiac myocyte differentiation. Regulates the circadian clock by repressing the transcriptional activator activity of the CLOCK-BMAL1 heterodimer. Restricts the CLOCK and BMAL1 localization to the cytoplasm. Plays a role in both the input and output pathways of the circadian clock: in the input component, is involved in modulating the magnitude of photic entrainment and in the output component, contributes to the regulation of a variety of liver clock-controlled genes involved in lipid metabolism. The protein is DNA-binding protein inhibitor ID-2 (Id2) of Mus musculus (Mouse).